The following is a 3434-amino-acid chain: Genome polyprotein (3434 aa).

The Cytoplasmic segment spans residues 1–106; that stretch reads MSKKPGGPGR…NRGTKKKRGN (106 aa). The segment at 2–15 is interaction with host EXOC1; that stretch reads SKKPGGPGRNRAIN. The tract at residues 37 to 72 is hydrophobic; homodimerization of capsid protein C; the sequence is LLDGRGPVRFVLALMTFFKFTALAPTKALLGRWKRI. A propeptide spans 105–126 (ER anchor for the capsid protein C, removed in mature form by serine protease NS3); sequence GNNGPGLVMIITLMTVVSMVSS. Residues 107 to 126 traverse the membrane as a helical segment; it reads NGPGLVMIITLMTVVSMVSS. Over 127 to 248 the chain is Extracellular; the sequence is LKLSNFQGKV…DSTKASRYLM (122 aa). An N-linked (GlcNAc...) asparagine; by host glycan is attached at Asn-141. A helical transmembrane segment spans residues 249–273; sequence KTENWIIRNPGYAFVAVLLGWMLGS. Residues 274-278 lie on the Cytoplasmic side of the membrane; the sequence is NNGQR. Residues 279 to 293 traverse the membrane as a helical segment; it reads VVFVVLLLLVAPAYS. The Extracellular portion of the chain corresponds to 294-745; that stretch reads FNCLGMSNRD…QVFGGAFRTL (452 aa). Cystine bridges form between Cys-296–Cys-323, Cys-353–Cys-409, Cys-353–Cys-414, Cys-367–Cys-398, Cys-385–Cys-409, Cys-385–Cys-414, Cys-483–Cys-580, and Cys-597–Cys-628. The segment at 391-404 is fusion peptide; that stretch reads DRGWGNGCGLFGKG. The helical transmembrane segment at 746–766 threads the bilayer; it reads FGGMSWITQGLMGALLLWMGV. Residues 767–772 are Cytoplasmic-facing; sequence NARDRS. Residues 773-793 form a helical membrane-spanning segment; the sequence is IALVMLATGGVLLFLATNVHA. Over 794-1218 the chain is Extracellular; it reads DSGCAIDVGR…AFAEANSGGD (425 aa). Cystine bridges form between Cys-797–Cys-808 and Cys-848–Cys-936. N-linked (GlcNAc...) asparagine; by host glycosylation is found at Asn-923, Asn-968, and Asn-1000. 6 disulfide bridges follow: Cys-972/Cys-1016, Cys-1073/Cys-1122, Cys-1084/Cys-1105, Cys-1084/Cys-1106, Cys-1105/Cys-1109, and Cys-1106/Cys-1109. The helical transmembrane segment at 1219–1239 threads the bilayer; that stretch reads VVHLALIAAFKIQPGFLAMTF. Residues 1240–1249 are Cytoplasmic-facing; it reads LRGKWTNQEN. A helical transmembrane segment spans residues 1250–1270; sequence ILLALGAAFFQMAATDLNFSL. Residues 1271–1286 are Lumenal-facing; that stretch reads PGILNATATAWMLLRA. A helical transmembrane segment spans residues 1287-1307; that stretch reads ATQPSTSAIVMPLLCLLAPGM. Arg-1308 is a topological domain (cytoplasmic). Residues 1309 to 1329 traverse the membrane as a helical segment; sequence LLYLDTYRITLIIIGICSLIG. Residues 1330 to 1340 lie on the Lumenal side of the membrane; that stretch reads ERRRAAAKKKG. Residues 1341 to 1361 form a helical membrane-spanning segment; sequence AVLLGLALTSTGQFSASVMAA. The Cytoplasmic portion of the chain corresponds to 1362-1373; sequence GLMACNPNKKRG. A helical membrane pass occupies residues 1374-1394; that stretch reads WPATEVLTAVGLMFAIVGGLA. At 1395-1397 the chain is on the lumenal side; it reads ELD. The chain crosses the membrane as a helical span at residues 1398–1418; sequence VDSMSIPFVLAGLMAVSYTIS. Residues 1419 to 1475 lie on the Cytoplasmic side of the membrane; sequence GKSTDLWLERAADITWETDAAITGTSQRLDVKLDDDGDFHLINDPGVPWKIWVIRMT. Residues 1426 to 1465 are interacts with and activates NS3 protease; that stretch reads LERAADITWETDAAITGTSQRLDVKLDDDGDFHLINDPGV. Positions 1476-1496 form an intramembrane region, helical; it reads ALGFAAWTPWAIIPAGIGYWL. The Cytoplasmic segment spans residues 1497–2173; the sequence is TVKYAKRGGV…MALEELPDAL (677 aa). A Peptidase S7 domain is found at 1504–1681; it reads GGVFWDTPAP…EREEEPVPEA (178 aa). Catalysis depends on charge relay system; for serine protease NS3 activity residues His-1554, Asp-1578, and Ser-1638. Residues 1684–1840 enclose the Helicase ATP-binding domain; the sequence is ADMLRKKQLT…DTNAPVTDIQ (157 aa). Positions 1688 to 1691 are important for RNA-binding; sequence RKKQ. Position 1697 to 1704 (1697 to 1704) interacts with ATP; the sequence is LHPGAGKT. Residues 1788 to 1791 carry the DEAH box motif; it reads DEAH. The 166-residue stretch at 1851 to 2016 folds into the Helicase C-terminal domain; it reads GFEWITEYTG…GLVAQMYGPE (166 aa). At Lys-1892 the chain carries N6-acetyllysine; by host. The tract at residues 1956 to 1980 is disordered; it reads ASAAQRRGRVGRNPSQIGDEYHYGG. The interval 2167–2171 is regulates the ATPase activity of NS3 helicase; that stretch reads EELPD. The chain crosses the membrane as a helical span at residues 2174 to 2194; it reads ETITLIVALAVMTAGVFLLLV. The Lumenal portion of the chain corresponds to 2195–2198; that stretch reads QRRG. The segment at residues 2199-2219 is an intramembrane region (helical); it reads IGKLGLGGMVLGLATFFLWMA. Residue Asp-2220 is a topological domain, lumenal. The chain crosses the membrane as a helical span at residues 2221–2241; it reads VSGTKIAGTLLLALLMMIVLI. At 2242–2256 the chain is on the cytoplasmic side; it reads PEPEKQRSQTDNQLA. A helical membrane pass occupies residues 2257–2277; sequence VFLICVLLVVGVVAANEYGML. The Lumenal segment spans residues 2278 to 2313; the sequence is ERTKSDLGKIFSSTRQPQSALPLPSMNALALDLRPA. The helical intramembrane region spans 2314-2334; sequence TAWALYGGSTVVLTPLIKHLV. Residues 2335 to 2368 lie on the Lumenal side of the membrane; sequence TSEYITTSLASISAQAGSLFNLPRGLPFTELDFT. Residues 2369–2389 traverse the membrane as a helical segment; the sequence is VVLVFLGCWGQVSLTTLITAA. Over 2390 to 2446 the chain is Cytoplasmic; it reads ALATLHYGYMLPGWQAEALRAAQRRTAAGIMKNAVVDGLVATDVPELERTTPLMQKK. A helical membrane pass occupies residues 2447–2467; that stretch reads VGQILLIGVSAAALLVNPCVT. Over 2468–2471 the chain is Lumenal; sequence TVRE. The chain crosses the membrane as a helical span at residues 2472–2492; sequence AGILISAALLTLWDNGAIAVW. Over 2493-3434 the chain is Cytoplasmic; that stretch reads NSTTATGLCH…EVNVQEDRVL (942 aa). An mRNA cap 0-1 NS5-type MT domain is found at 2530–2795; sequence GRPGGRTLGE…DVNLGSGTRA (266 aa). Residues 2567–2587 form a disordered region; it reads SAARKARRDGNKTGGHPVSRG. Ser-2585 serves as a coordination point for S-adenosyl-L-methionine. At Ser-2585 the chain carries Phosphoserine. The active-site For 2'-O-MTase activity is the Lys-2590. S-adenosyl-L-methionine contacts are provided by Gly-2615, Trp-2616, Thr-2633, Lys-2634, Asp-2660, and Val-2661. Asp-2675 (for 2'-O-MTase activity) is an active-site residue. Residue Ile-2676 coordinates S-adenosyl-L-methionine. Catalysis depends on for 2'-O-MTase activity residues Lys-2711 and Glu-2747. Tyr-2749 serves as a coordination point for S-adenosyl-L-methionine. Zn(2+) contacts are provided by Glu-2969, His-2973, Cys-2978, and Cys-2981. The region spanning 3059-3211 is the RdRp catalytic domain; sequence GKMYADDTAG…KPLDDRFANA (153 aa). Residues His-3246, Cys-3262, and Cys-3381 each contribute to the Zn(2+) site.

The protein in the N-terminal section; belongs to the class I-like SAM-binding methyltransferase superfamily. mRNA cap 0-1 NS5-type methyltransferase family. As to quaternary structure, homodimer. Interacts (via N-terminus) with host EXOC1 (via C-terminus); this interaction results in EXOC1 degradation through the proteasome degradation pathway. In terms of assembly, forms heterodimers with envelope protein E in the endoplasmic reticulum and Golgi. Homodimer; in the endoplasmic reticulum and Golgi. Interacts with protein prM. Interacts with non-structural protein 1. As to quaternary structure, homodimer; Homohexamer when secreted. Interacts with envelope protein E. NS1 interacts with NS4B. Interacts with host complement protein CFH; this interaction leads to the degradation of C3. In terms of assembly, interacts (via N-terminus) with serine protease NS3. Forms a heterodimer with serine protease NS3. May form homooligomers. As to quaternary structure, forms a heterodimer with NS2B. Interacts with non-structural protein 2A (via N-terminus). Interacts with NS4B. Interacts with unphosphorylated RNA-directed RNA polymerase NS5; this interaction stimulates RNA-directed RNA polymerase NS5 guanylyltransferase activity. In terms of assembly, interacts with serine protease NS3. Homodimer. Interacts with host STAT2; this interaction inhibits the phosphorylation of the latter, and, when all viral proteins are present (polyprotein), targets STAT2 for degradation. Interacts with serine protease NS3. Specific enzymatic cleavages in vivo yield mature proteins. Cleavages in the lumen of endoplasmic reticulum are performed by host signal peptidase, whereas cleavages in the cytoplasmic side are performed by serine protease NS3. Signal cleavage at the 2K-4B site requires a prior NS3 protease-mediated cleavage at the 4A-2K site. In terms of processing, cleaved in post-Golgi vesicles by a host furin, releasing the mature small envelope protein M, and peptide pr. This cleavage is incomplete as up to 30% of viral particles still carry uncleaved prM. Post-translationally, N-glycosylated. N-glycosylated. The excreted form is glycosylated and this is required for efficient secretion of the protein from infected cells. In terms of processing, acetylated by host KAT5. Acetylation modulates NS3 RNA-binding and unwinding activities and plays an important positive role for viral replication. Post-translationally, phosphorylated on serines residues. This phosphorylation may trigger NS5 nuclear localization.

It is found in the virion. Its subcellular location is the host nucleus. The protein localises to the host cytoplasm. The protein resides in the host perinuclear region. It localises to the secreted. It is found in the virion membrane. Its subcellular location is the host endoplasmic reticulum membrane. It catalyses the reaction Selective hydrolysis of -Xaa-Xaa-|-Yaa- bonds in which each of the Xaa can be either Arg or Lys and Yaa can be either Ser or Ala.. The enzyme catalyses RNA(n) + a ribonucleoside 5'-triphosphate = RNA(n+1) + diphosphate. The catalysed reaction is a ribonucleoside 5'-triphosphate + H2O = a ribonucleoside 5'-diphosphate + phosphate + H(+). It carries out the reaction ATP + H2O = ADP + phosphate + H(+). It catalyses the reaction a 5'-end (5'-triphosphoguanosine)-ribonucleoside in mRNA + S-adenosyl-L-methionine = a 5'-end (N(7)-methyl 5'-triphosphoguanosine)-ribonucleoside in mRNA + S-adenosyl-L-homocysteine. The enzyme catalyses a 5'-end (N(7)-methyl 5'-triphosphoguanosine)-ribonucleoside in mRNA + S-adenosyl-L-methionine = a 5'-end (N(7)-methyl 5'-triphosphoguanosine)-(2'-O-methyl-ribonucleoside) in mRNA + S-adenosyl-L-homocysteine + H(+). Its function is as follows. Plays a role in virus budding by binding to the cell membrane and gathering the viral RNA into a nucleocapsid that forms the core of a mature virus particle. During virus entry, may induce genome penetration into the host cytoplasm after hemifusion induced by the surface proteins. Can migrate to the cell nucleus where it modulates host functions. Overcomes the anti-viral effects of host EXOC1 by sequestering and degrading the latter through the proteasome degradation pathway. Functionally, inhibits RNA silencing by interfering with host Dicer. In terms of biological role, prevents premature fusion activity of envelope proteins in trans-Golgi by binding to envelope protein E at pH6.0. After virion release in extracellular space, gets dissociated from E dimers. Acts as a chaperone for envelope protein E during intracellular virion assembly by masking and inactivating envelope protein E fusion peptide. prM is the only viral peptide matured by host furin in the trans-Golgi network probably to avoid catastrophic activation of the viral fusion activity in acidic Golgi compartment prior to virion release. prM-E cleavage is inefficient, and many virions are only partially matured. These uncleaved prM would play a role in immune evasion. Its function is as follows. May play a role in virus budding. Exerts cytotoxic effects by activating a mitochondrial apoptotic pathway through M ectodomain. May display a viroporin activity. Functionally, binds to host cell surface receptor and mediates fusion between viral and cellular membranes. Envelope protein is synthesized in the endoplasmic reticulum in the form of heterodimer with protein prM. They play a role in virion budding in the ER, and the newly formed immature particle is covered with 60 spikes composed of heterodimer between precursor prM and envelope protein E. The virion is transported to the Golgi apparatus where the low pH causes dissociation of PrM-E heterodimers and formation of E homodimers. prM-E cleavage is inefficient, and many virions are only partially matured. These uncleaved prM would play a role in immune evasion. In terms of biological role, involved in immune evasion, pathogenesis and viral replication. Once cleaved off the polyprotein, is targeted to three destinations: the viral replication cycle, the plasma membrane and the extracellular compartment. Essential for viral replication. Required for formation of the replication complex and recruitment of other non-structural proteins to the ER-derived membrane structures. Excreted as a hexameric lipoparticle that plays a role against host immune response. Antagonizing the complement function. Binds to the host macrophages and dendritic cells. Inhibits signal transduction originating from Toll-like receptor 3 (TLR3). Component of the viral RNA replication complex that functions in virion assembly and antagonizes the host alpha/beta interferon antiviral response. Its function is as follows. Required cofactor for the serine protease function of NS3. May have membrane-destabilizing activity and form viroporins. Functionally, displays three enzymatic activities: serine protease, NTPase and RNA helicase. NS3 serine protease, in association with NS2B, performs its autocleavage and cleaves the polyprotein at dibasic sites in the cytoplasm: C-prM, NS2A-NS2B, NS2B-NS3, NS3-NS4A, NS4A-2K and NS4B-NS5. NS3 RNA helicase binds RNA and unwinds dsRNA in the 3' to 5' direction. In terms of biological role, regulates the ATPase activity of the NS3 helicase activity. NS4A allows NS3 helicase to conserve energy during unwinding. Functions as a signal peptide for NS4B and is required for the interferon antagonism activity of the latter. Its function is as follows. Induces the formation of ER-derived membrane vesicles where the viral replication takes place. Inhibits interferon (IFN)-induced host STAT1 phosphorylation and nuclear translocation, thereby preventing the establishment of cellular antiviral state by blocking the IFN-alpha/beta pathway. Inhibits STAT2 translocation in the nucleus after IFN-alpha treatment. Functionally, replicates the viral (+) and (-) RNA genome, and performs the capping of genomes in the cytoplasm. NS5 methylates viral RNA cap at guanine N-7 and ribose 2'-O positions. Besides its role in RNA genome replication, also prevents the establishment of cellular antiviral state by blocking the interferon-alpha/beta (IFN-alpha/beta) signaling pathway. Inhibits host TYK2 and STAT2 phosphorylation, thereby preventing activation of JAK-STAT signaling pathway. This is Genome polyprotein from Usutu virus (USUV).